A 583-amino-acid polypeptide reads, in one-letter code: Chromosomal replication initiator protein DnaA (583 aa).

Residues 1–91 (MNAENLDPAT…SPMFPAFKVM (91 aa)) are domain I, interacts with DnaA modulators. Disordered regions lie at residues 86-179 (PAFK…QQPV) and 197-232 (VAGF…NYRD). The interval 91–235 (MPPAQPEPQT…VTGNYRDPVT (145 aa)) is domain II. Polar residues predominate over residues 97–106 (EPQTTASPED). 2 stretches are compositionally biased toward basic and acidic residues: residues 126-135 (EDSRTPRHSA) and 147-174 (QERE…EHEP). The segment covering 205–226 (AGTTAPQYPPQSEMQGSFTPGV) has biased composition (polar residues). A domain III, AAA+ region region spans residues 236–460 (HLNSNDTFDT…GALKRVIAMA (225 aa)). Positions 280, 282, 283, and 284 each coordinate ATP. Residues 461 to 583 (SLNHQPVTRA…TVELKQHLND (123 aa)) form a domain IV, binds dsDNA region.

The protein belongs to the DnaA family. As to quaternary structure, oligomerizes as a right-handed, spiral filament on DNA at oriC.

It localises to the cytoplasm. Its function is as follows. Plays an essential role in the initiation and regulation of chromosomal replication. ATP-DnaA binds to the origin of replication (oriC) to initiate formation of the DNA replication initiation complex once per cell cycle. Binds the DnaA box (a 9 base pair repeat at the origin) and separates the double-stranded (ds)DNA. Forms a right-handed helical filament on oriC DNA; dsDNA binds to the exterior of the filament while single-stranded (ss)DNA is stabiized in the filament's interior. The ATP-DnaA-oriC complex binds and stabilizes one strand of the AT-rich DNA unwinding element (DUE), permitting loading of DNA polymerase. After initiation quickly degrades to an ADP-DnaA complex that is not apt for DNA replication. Binds acidic phospholipids. In Bifidobacterium animalis subsp. lactis (strain AD011), this protein is Chromosomal replication initiator protein DnaA.